We begin with the raw amino-acid sequence, 344 residues long: Meiotically up-regulated gene 10 protein (344 aa).

A DH domain is found at 48–207; it reads EFNSILQEII…RELCSYIDQE (160 aa).

It is found in the cytoplasm. The protein resides in the nucleus. Its function is as follows. Has a role in meiosis. The protein is Meiotically up-regulated gene 10 protein (mug10) of Schizosaccharomyces pombe (strain 972 / ATCC 24843) (Fission yeast).